The chain runs to 472 residues: DNA-cytosine methyltransferase (472 aa).

The region spanning phenylalanine 87 to alanine 457 is the SAM-dependent MTase C5-type domain. The active site involves cysteine 177.

Belongs to the class I-like SAM-binding methyltransferase superfamily. C5-methyltransferase family.

It carries out the reaction a 2'-deoxycytidine in DNA + S-adenosyl-L-methionine = a 5-methyl-2'-deoxycytidine in DNA + S-adenosyl-L-homocysteine + H(+). Functionally, this methylase recognizes the double-stranded sequence 5'-CCWGG-3', methylates C-2 on both strands. In Escherichia coli O157:H7, this protein is DNA-cytosine methyltransferase (dcm).